The sequence spans 324 residues: Elongation factor P--(R)-beta-lysine ligase (324 aa).

Residue 75–77 coordinates substrate; that stretch reads SPE. ATP contacts are provided by residues 99–101 and Asn-108; that span reads RNE. Tyr-117 is a binding site for substrate. Residue 243-244 participates in ATP binding; that stretch reads EL. Glu-250 contributes to the substrate binding site. Gly-299 contacts ATP.

The protein belongs to the class-II aminoacyl-tRNA synthetase family. EpmA subfamily. In terms of assembly, homodimer.

It catalyses the reaction D-beta-lysine + L-lysyl-[protein] + ATP = N(6)-((3R)-3,6-diaminohexanoyl)-L-lysyl-[protein] + AMP + diphosphate + H(+). Its function is as follows. With EpmB is involved in the beta-lysylation step of the post-translational modification of translation elongation factor P (EF-P). Catalyzes the ATP-dependent activation of (R)-beta-lysine produced by EpmB, forming a lysyl-adenylate, from which the beta-lysyl moiety is then transferred to the epsilon-amino group of a conserved specific lysine residue in EF-P. In Pseudoalteromonas translucida (strain TAC 125), this protein is Elongation factor P--(R)-beta-lysine ligase.